The primary structure comprises 160 residues: Cyclic pyranopterin monophosphate synthase (160 aa).

Substrate contacts are provided by residues 76 to 78 (LCH) and 114 to 115 (ME). Residue Asp129 is part of the active site.

The protein belongs to the MoaC family. In terms of assembly, homohexamer; trimer of dimers.

It carries out the reaction (8S)-3',8-cyclo-7,8-dihydroguanosine 5'-triphosphate = cyclic pyranopterin phosphate + diphosphate. The protein operates within cofactor biosynthesis; molybdopterin biosynthesis. Functionally, catalyzes the conversion of (8S)-3',8-cyclo-7,8-dihydroguanosine 5'-triphosphate to cyclic pyranopterin monophosphate (cPMP). This is Cyclic pyranopterin monophosphate synthase from Mesorhizobium japonicum (strain LMG 29417 / CECT 9101 / MAFF 303099) (Mesorhizobium loti (strain MAFF 303099)).